Reading from the N-terminus, the 300-residue chain is Cation-efflux pump FieF (300 aa).

Residues 24-44 traverse the membrane as a helical segment; it reads LLIKIFAWWYTGSVSILAALV. 2 residues coordinate Zn(2+): Asp45 and Asp49. Transmembrane regions (helical) follow at residues 82 to 102 and 114 to 134; these read AALA…LTSI and PGVG…LVTF. 2 residues coordinate Zn(2+): His153 and Asp157. Transmembrane regions (helical) follow at residues 156–176 and 178–198; these read SDVM…YGWH and ADAL…LRMG.

Belongs to the cation diffusion facilitator (CDF) transporter (TC 2.A.4) family. FieF subfamily. Homodimer.

It localises to the cell inner membrane. It carries out the reaction Zn(2+)(in) + H(+)(out) = Zn(2+)(out) + H(+)(in). The catalysed reaction is Cd(2+)(in) + H(+)(out) = Cd(2+)(out) + H(+)(in). The enzyme catalyses Fe(2+)(in) + H(+)(out) = Fe(2+)(out) + H(+)(in). Divalent metal cation transporter which exports Zn(2+), Cd(2+) and possibly Fe(2+). May be involved in zinc and iron detoxification by efflux. The chain is Cation-efflux pump FieF from Salmonella schwarzengrund (strain CVM19633).